The following is a 707-amino-acid chain: Leukotoxin export ATP-binding protein LtxB (707 aa).

Residues 4-125 (QKNTNLALQA…ERYQSKVILI (122 aa)) form the Peptidase C39 domain. Residue His83 is part of the active site. 5 helical membrane passes run 158-178 (LIVS…FQVV), 191-211 (LNVI…LGGL), 269-289 (ALTS…MWYY), 295-315 (LVVL…SPIL), and 387-407 (AVMV…DLSI). Positions 158-436 (LIVSIFLQIF…LAQIWQDFQQ (279 aa)) constitute an ABC transmembrane type-1 domain. Positions 468–703 (ISFRNIKFRY…EKGLYSYLHQ (236 aa)) constitute an ABC transporter domain. 502-509 (GRSGSGKS) contributes to the ATP binding site.

The protein belongs to the ABC transporter superfamily. Protein-1 exporter (TC 3.A.1.109) family. In terms of assembly, probably part of a complex composed of LtxB, LtxD and TdeA, which forms a single transport channel across the two membranes.

It is found in the cell inner membrane. The enzyme catalyses ATP + H2O + proteinSide 1 = ADP + phosphate + proteinSide 2.. In terms of biological role, involved in the export of the LtxA leukotoxin. The sequence is that of Leukotoxin export ATP-binding protein LtxB from Aggregatibacter actinomycetemcomitans (Actinobacillus actinomycetemcomitans).